A 292-amino-acid polypeptide reads, in one-letter code: Coatomer subunit epsilon (292 aa).

This sequence belongs to the COPE family. In terms of assembly, oligomeric complex that consists of at least the alpha, beta, beta', gamma, delta, epsilon and zeta subunits.

The protein localises to the cytoplasm. Its subcellular location is the golgi apparatus membrane. The protein resides in the cytoplasmic vesicle. It localises to the COPI-coated vesicle membrane. The coatomer is a cytosolic protein complex that binds to dilysine motifs and reversibly associates with Golgi non-clathrin-coated vesicles, which further mediate biosynthetic protein transport from the ER, via the Golgi up to the trans Golgi network. The coatomer complex is required for budding from Golgi membranes, and is essential for the retrograde Golgi-to-ER transport of dilysine-tagged proteins. The polypeptide is Coatomer subunit epsilon (cope-1) (Caenorhabditis elegans).